A 241-amino-acid polypeptide reads, in one-letter code: Transmembrane protein 176A (241 aa).

Phosphoserine is present on Ser38. A run of 4 helical transmembrane segments spans residues 65–85 (WVMQ…LYIF), 93–113 (SGAP…AFIY), 127–147 (LLAL…AGRF), and 193–213 (LFIS…LASL).

It belongs to the TMEM176 family. Interacts with MCOLN2.

Its subcellular location is the membrane. This chain is Transmembrane protein 176A (TMEM176A), found in Bos taurus (Bovine).